Reading from the N-terminus, the 485-residue chain is Glycogen synthase (485 aa).

Lys20 contacts ADP-alpha-D-glucose.

The protein belongs to the glycosyltransferase 1 family. Bacterial/plant glycogen synthase subfamily.

The catalysed reaction is [(1-&gt;4)-alpha-D-glucosyl](n) + ADP-alpha-D-glucose = [(1-&gt;4)-alpha-D-glucosyl](n+1) + ADP + H(+). It functions in the pathway glycan biosynthesis; glycogen biosynthesis. Synthesizes alpha-1,4-glucan chains using ADP-glucose. The protein is Glycogen synthase of Vibrio vulnificus (strain CMCP6).